Here is a 152-residue protein sequence, read N- to C-terminus: MTEPLRIAVTQLPHGQGLPLPAYQTEHAAGLDLLAAVPEDKPLAIAPGERALVPTGLAIALPAGYEAQVRPRSGLAVKHGVTVLNAPGTIDADYRGEIGVPLINHGRETFIIRRGERIAQMVVAPVVQIAFEPVAELPMSARGAGGFGSTGR.

Residues 72-74, N85, and 89-91 contribute to the substrate site; these read RSG and TID.

Belongs to the dUTPase family. The cofactor is Mg(2+).

The catalysed reaction is dUTP + H2O = dUMP + diphosphate + H(+). It participates in pyrimidine metabolism; dUMP biosynthesis; dUMP from dCTP (dUTP route): step 2/2. Its function is as follows. This enzyme is involved in nucleotide metabolism: it produces dUMP, the immediate precursor of thymidine nucleotides and it decreases the intracellular concentration of dUTP so that uracil cannot be incorporated into DNA. This Afipia carboxidovorans (strain ATCC 49405 / DSM 1227 / KCTC 32145 / OM5) (Oligotropha carboxidovorans) protein is Deoxyuridine 5'-triphosphate nucleotidohydrolase.